Reading from the N-terminus, the 292-residue chain is Glutamate racemase (292 aa).

Residues 28–29 (DS) and 60–61 (YG) contribute to the substrate site. Cys91 (proton donor/acceptor) is an active-site residue. 92 to 93 (NT) is a binding site for substrate. The Proton donor/acceptor role is filled by Cys200. 201-202 (TH) lines the substrate pocket.

The protein belongs to the aspartate/glutamate racemases family.

The enzyme catalyses L-glutamate = D-glutamate. It functions in the pathway cell wall biogenesis; peptidoglycan biosynthesis. Its function is as follows. Provides the (R)-glutamate required for cell wall biosynthesis. This Nostoc sp. (strain PCC 7120 / SAG 25.82 / UTEX 2576) protein is Glutamate racemase.